We begin with the raw amino-acid sequence, 286 residues long: Non-homologous end joining protein Ku (286 aa).

The 166-residue stretch at T10–V175 folds into the Ku domain. Over residues E226–D242 the composition is skewed to basic and acidic residues. A disordered region spans residues E226–L270. Residues E243 to E254 show a composition bias toward acidic residues.

The protein belongs to the prokaryotic Ku family. As to quaternary structure, homodimer. Interacts with LigD.

Functionally, with LigD forms a non-homologous end joining (NHEJ) DNA repair enzyme, which repairs dsDNA breaks with reduced fidelity. Binds linear dsDNA with 5'- and 3'- overhangs but not closed circular dsDNA nor ssDNA. Recruits and stimulates the ligase activity of LigD. The protein is Non-homologous end joining protein Ku of Actinosynnema mirum (strain ATCC 29888 / DSM 43827 / JCM 3225 / NBRC 14064 / NCIMB 13271 / NRRL B-12336 / IMRU 3971 / 101).